Consider the following 404-residue polypeptide: MTEETISQAVPPVRDWPAVDLPGSDFDPVLTELMREGPVTRISLPNGEGWAWLVTRHDDVRLVTNDPRFGREAVMDRQVTRLAPHFIPARGAVGFLDPPDHTRLRRSVAAAFTARGVERVRERSRGMLDELVDAMLRAGPPADLTEAVLSPFPIAVICELMGVPATDRHSMHTWTQLILSSSHGAEVSERAKNEMNAYFSDLIGLRSDSAGEDVTSLLGAAVGRDEITLSEAVGLAVLLQIGGEAVTNNSGQMFHLLLSRPELAERLRSEPEIRPRAIDELLRWIPHRNAVGLSRIALEDVEIKGVRIRAGDAVYVSYLAANRDPEVFPDPDRIDFERSPNPHVSFGFGPHYCPGGMLARLESELLVDAVLDRVPGLKLAVAPEDVPFKKGALIRGPEALPVTW.

Flaviolin is bound by residues arginine 288 and leucine 293. Cysteine 353 contributes to the heme binding site.

It belongs to the cytochrome P450 family. Heme is required as a cofactor.

The enzyme catalyses 2 flaviolin + 2 reduced [2Fe-2S]-[ferredoxin] + O2 + H(+) = 3,3'-biflaviolin + 2 oxidized [2Fe-2S]-[ferredoxin] + 2 H2O. The catalysed reaction is 2 flaviolin + 2 reduced [2Fe-2S]-[ferredoxin] + O2 + H(+) = 3,8'-biflaviolin + 2 oxidized [2Fe-2S]-[ferredoxin] + 2 H2O. It participates in pigment biosynthesis. Catalyzes oxidative C-C coupling reaction to polymerize flaviolin and form highly conjugated pigments which protect the soil bacterium from deleterious effects of UV irradiation (three isomers of biflaviolin and one triflaviolin). The protein is Biflaviolin synthase CYP158A2 of Streptomyces coelicolor (strain ATCC BAA-471 / A3(2) / M145).